The following is a 116-amino-acid chain: MKQNLLAVETWYMLILSFRFLFFSRNYNLILCDYLVNTQTVNRVVMAIRSSKRVGKPLFLRYIVMISLKRLPKKCRCGGSPASLPEKYVIMSNKLPYYTNTELDYVIHLDQIDRDL.

A helical membrane pass occupies residues 5-23 (LLAVETWYMLILSFRFLFF).

Its subcellular location is the membrane. This is an uncharacterized protein from Saccharomyces cerevisiae (strain ATCC 204508 / S288c) (Baker's yeast).